The sequence spans 481 residues: Argininosuccinate lyase (481 aa).

The segment covering 1-17 (MKNAPVDTQSDAATSFE) has biased composition (polar residues). Residues 1 to 25 (MKNAPVDTQSDAATSFEGTAANPQW) are disordered.

This sequence belongs to the lyase 1 family. Argininosuccinate lyase subfamily.

It is found in the cytoplasm. It carries out the reaction 2-(N(omega)-L-arginino)succinate = fumarate + L-arginine. Its pathway is amino-acid biosynthesis; L-arginine biosynthesis; L-arginine from L-ornithine and carbamoyl phosphate: step 3/3. This chain is Argininosuccinate lyase, found in Gluconobacter oxydans (strain 621H) (Gluconobacter suboxydans).